We begin with the raw amino-acid sequence, 304 residues long: UPF0282 protein TSIB_1029 (304 aa).

Belongs to the UPF0282 family.

The polypeptide is UPF0282 protein TSIB_1029 (Thermococcus sibiricus (strain DSM 12597 / MM 739)).